We begin with the raw amino-acid sequence, 292 residues long: 4-hydroxy-tetrahydrodipicolinate synthase (292 aa).

Thr-45 lines the pyruvate pocket. The active-site Proton donor/acceptor is Tyr-133. The active-site Schiff-base intermediate with substrate is Lys-162. Pyruvate is bound at residue Ile-204.

It belongs to the DapA family. In terms of assembly, homotetramer; dimer of dimers.

Its subcellular location is the cytoplasm. It catalyses the reaction L-aspartate 4-semialdehyde + pyruvate = (2S,4S)-4-hydroxy-2,3,4,5-tetrahydrodipicolinate + H2O + H(+). It participates in amino-acid biosynthesis; L-lysine biosynthesis via DAP pathway; (S)-tetrahydrodipicolinate from L-aspartate: step 3/4. Catalyzes the condensation of (S)-aspartate-beta-semialdehyde [(S)-ASA] and pyruvate to 4-hydroxy-tetrahydrodipicolinate (HTPA). The chain is 4-hydroxy-tetrahydrodipicolinate synthase from Nitratidesulfovibrio vulgaris (strain DSM 19637 / Miyazaki F) (Desulfovibrio vulgaris).